Reading from the N-terminus, the 92-residue chain is Small ribosomal subunit protein uS19 (92 aa).

This sequence belongs to the universal ribosomal protein uS19 family.

Its function is as follows. Protein S19 forms a complex with S13 that binds strongly to the 16S ribosomal RNA. In Albidiferax ferrireducens (strain ATCC BAA-621 / DSM 15236 / T118) (Rhodoferax ferrireducens), this protein is Small ribosomal subunit protein uS19.